The chain runs to 434 residues: D-amino acid dehydrogenase (434 aa).

3-17 contributes to the FAD binding site; the sequence is VIILGGGVIGVTSAW.

The protein belongs to the DadA oxidoreductase family. FAD serves as cofactor.

It catalyses the reaction a D-alpha-amino acid + A + H2O = a 2-oxocarboxylate + AH2 + NH4(+). It participates in amino-acid degradation; D-alanine degradation; NH(3) and pyruvate from D-alanine: step 1/1. Functionally, oxidative deamination of D-amino acids. The sequence is that of D-amino acid dehydrogenase from Proteus mirabilis (strain HI4320).